The primary structure comprises 901 residues: Serine/threonine-protein kinase-like protein CR4 (901 aa).

The first 22 residues, 1–22, serve as a signal peptide directing secretion; the sequence is MDIVPVVALCCCLVLLPSWAYG. A run of 7 repeats spans residues 31-66, 70-105, 123-158, 160-193, 201-234, 251-285, and 290-328. Positions 31 to 328 are 7 X 36 AA repeats; the sequence is VSYGEDGPVF…PLALPMAVSP (298 aa). Asn-149 and Asn-177 each carry an N-linked (GlcNAc...) asparagine glycan. Asn-280 carries an N-linked (GlcNAc...) asparagine glycan. The stretch at 335–389 is one TNFR-Cys repeat; it reads SCSHGYYEYANHGEVGSGSKTCKPANSRLCLPCSVGCPDDSYESSPCNATADRVC. Disulfide bonds link Cys-336-Cys-364, Cys-367-Cys-381, and Cys-371-Cys-389. N-linked (GlcNAc...) asparagine glycosylation occurs at Asn-382. A helical transmembrane segment spans residues 423–443; sequence IFVAEIAFAVILVFSVTAIAC. Positions 504-781 constitute a Protein kinase domain; that stretch reads FSEDSQVGKG…KVTTALERAL (278 aa). Residues 510–518 and Lys-532 contribute to the ATP site; that span reads VGKGSFSCV. Residue Asp-633 is the Proton acceptor of the active site. A disordered region spans residues 845-901; it reads VTSSQRRKSSASEADMDGRTTTDGRNVGSSIGDGLRSLEEEISPASPQENLYLQHNF. Over residues 889 to 901 the composition is skewed to polar residues; it reads ASPQENLYLQHNF.

The protein belongs to the protein kinase superfamily. Ser/Thr protein kinase family. In terms of assembly, homodimer. In terms of processing, autophosphorylated. Specifically expressed in the epidermal cells of paleas and lemmas.

It is found in the cell membrane. The protein localises to the endosome. It localises to the multivesicular body membrane. It carries out the reaction L-seryl-[protein] + ATP = O-phospho-L-seryl-[protein] + ADP + H(+). It catalyses the reaction L-threonyl-[protein] + ATP = O-phospho-L-threonyl-[protein] + ADP + H(+). Functionally, receptor protein kinase. Could play a role in a differentiation signal. Controls formative cell division in meristems. Regulates epidermal cell differentiation in many organs. During floral organogenesis, required to maintain the interlocking of the palea and lemma, and fertility. Triggers culm elongation. The chain is Serine/threonine-protein kinase-like protein CR4 from Oryza sativa subsp. japonica (Rice).